The chain runs to 845 residues: ATP-binding cassette sub-family F member 1 (845 aa).

The interval 1 to 261 (MPKAPKQQPP…HLSKKEKKKL (261 aa)) is disordered. Phosphoserine is present on residues Ser-22 and Ser-24. Over residues 29–39 (KKGKKDKKIKK) the composition is skewed to basic residues. Residues 47–64 (VEDKQAGEEEKVLKEKEQ) are compositionally biased toward basic and acidic residues. A compositionally biased stretch (basic residues) spans 73 to 85 (QKKKRDTRKGRRK). A Phosphoserine modification is found at Ser-105. Thr-108 is modified (phosphothreonine). Ser-109 and Ser-140 each carry phosphoserine; by CK2. Residues 147 to 160 (EKHPPKPAKPEKNR) are compositionally biased toward basic and acidic residues. Ser-166 carries the phosphoserine modification. Residues 206 to 226 (EIIKEKEPPKQGKEKAKKAEQ) show a composition bias toward basic and acidic residues. Acidic residues predominate over residues 227 to 241 (GSEEEGEGEEEEEEG). A Phosphoserine modification is found at Ser-228. An ABC transporter 1 domain is found at 304–548 (IKLEKFSISA…MYQQKQKELL (245 aa)). 336–343 (GPNGKGKT) serves as a coordination point for ATP. The span at 559-580 (KELKAGGKSTKQAEKQTKEALT) shows a compositional bias: basic and acidic residues. Residues 559 to 602 (KELKAGGKSTKQAEKQTKEALTRKQQKCRRKNQDEESQEAPELL) form a disordered region. Ser-595 bears the Phosphoserine mark. Positions 625-840 (LGLHGVTFGY…VLEALGEVMV (216 aa)) constitute an ABC transporter 2 domain. Position 658–665 (658–665 (GPNGVGKS)) interacts with ATP.

It belongs to the ABC transporter superfamily. ABCF family. EF3 subfamily. As to quaternary structure, isoform 2 interacts (via N-terminus) with EIF2S1; the interaction is independent of its phosphorylated status. Isoform 2 associates (via both ABC transporter domains) with the ribosomes. In terms of processing, isoform 2 is phosphorylated at phosphoserine and phosphothreonine. Isoform 2 phosphorylation on Ser-109 and Ser-140 by CK2 inhibits association of EIF2 with ribosomes. In terms of tissue distribution, ubiquitous.

The protein resides in the cytoplasm. The protein localises to the nucleus. It is found in the nucleoplasm. Its subcellular location is the nucleus envelope. Its function is as follows. Isoform 2 is required for efficient Cap- and IRES-mediated mRNA translation initiation. Isoform 2 is not involved in the ribosome biogenesis. The sequence is that of ATP-binding cassette sub-family F member 1 (ABCF1) from Homo sapiens (Human).